A 243-amino-acid polypeptide reads, in one-letter code: 1-(5-phosphoribosyl)-5-[(5-phosphoribosylamino)methylideneamino] imidazole-4-carboxamide isomerase (243 aa).

Catalysis depends on D8, which acts as the Proton acceptor. Catalysis depends on D129, which acts as the Proton donor.

It belongs to the HisA/HisF family.

Its subcellular location is the cytoplasm. It carries out the reaction 1-(5-phospho-beta-D-ribosyl)-5-[(5-phospho-beta-D-ribosylamino)methylideneamino]imidazole-4-carboxamide = 5-[(5-phospho-1-deoxy-D-ribulos-1-ylimino)methylamino]-1-(5-phospho-beta-D-ribosyl)imidazole-4-carboxamide. The protein operates within amino-acid biosynthesis; L-histidine biosynthesis; L-histidine from 5-phospho-alpha-D-ribose 1-diphosphate: step 4/9. This chain is 1-(5-phosphoribosyl)-5-[(5-phosphoribosylamino)methylideneamino] imidazole-4-carboxamide isomerase, found in Nitratidesulfovibrio vulgaris (strain DSM 19637 / Miyazaki F) (Desulfovibrio vulgaris).